Here is a 64-residue protein sequence, read N- to C-terminus: Large ribosomal subunit protein bL35 (64 aa).

Residues 1-14 (MKNKTHKGTAKRVK) show a composition bias toward basic residues. The segment at 1-29 (MKNKTHKGTAKRVKVTGSGKLVREQANRR) is disordered.

Belongs to the bacterial ribosomal protein bL35 family.

The chain is Large ribosomal subunit protein bL35 from Corynebacterium glutamicum (strain R).